The primary structure comprises 189 residues: uncharacterized protein (189 aa).

To M.jannaschii MJ1461.

This is an uncharacterized protein from Methanocaldococcus jannaschii (strain ATCC 43067 / DSM 2661 / JAL-1 / JCM 10045 / NBRC 100440) (Methanococcus jannaschii).